Consider the following 370-residue polypeptide: Cytochrome b (370 aa).

A run of 4 helical transmembrane segments spans residues 25–45 (FGSMLLACSTLQVLTGFFLAV), 69–90 (WLMQNLHAIGASMFFICIYIHI), 105–125 (WLSGTMLLIMLMATAFFGYVL), and 170–190 (FFALHFILPFGIISLSSLHVI). Residues His-75 and His-89 each coordinate heme b. His-174 and His-188 together coordinate heme b. His-193 is a binding site for a ubiquinone. A run of 4 helical transmembrane segments spans residues 218 to 238 (YKDLLMLTIMTILLLLIVSFS), 280 to 300 (LGGALALTMSIIILMTVPFTH), 312 to 332 (FMQMTFWMFAATFLVITWTAT), and 339 to 358 (FTLIGQMASMLYFLFFISNP).

The protein belongs to the cytochrome b family. As to quaternary structure, the cytochrome bc1 complex contains 3 respiratory subunits (MT-CYB, CYC1 and UQCRFS1), 2 core proteins (UQCRC1 and UQCRC2) and probably 6 low-molecular weight proteins. It depends on heme b as a cofactor.

Its subcellular location is the mitochondrion inner membrane. Functionally, component of the ubiquinol-cytochrome c reductase complex (complex III or cytochrome b-c1 complex) that is part of the mitochondrial respiratory chain. The b-c1 complex mediates electron transfer from ubiquinol to cytochrome c. Contributes to the generation of a proton gradient across the mitochondrial membrane that is then used for ATP synthesis. The chain is Cytochrome b (MT-CYB) from Eunectes murinus (Green anaconda).